Consider the following 69-residue polypeptide: U-Asilidin(12)-Dg3b (69 aa).

Positions methionine 1–alanine 19 are cleaved as a signal peptide. A propeptide spanning residues serine 20 to arginine 33 is cleaved from the precursor. 3 disulfide bridges follow: cysteine 36–cysteine 59, cysteine 45–cysteine 65, and cysteine 49–cysteine 67.

Belongs to the asilidin-12 family. Expressed by the venom gland.

The protein localises to the secreted. Its function is as follows. The recombinant peptide moderately increases Kv11.1/KCNH2/ERG1 currents and shifts the voltage-dependence of the channel activation to hyperpolarised potentials. In vivo, induces neurotoxic effects when injected into insects (tested on L.cuprina and A.domesticus). This is U-Asilidin(12)-Dg3b from Dolopus genitalis (Giant Australian assassin fly).